Here is an 852-residue protein sequence, read N- to C-terminus: Bifunctional uridylyltransferase/uridylyl-removing enzyme (852 aa).

The segment at 1 to 318 (MPANLSSALE…SAPMRVTLRI (318 aa)) is uridylyltransferase. The interval 319–672 (DDDYIQVNNQ…SRILFKSDSF (354 aa)) is uridylyl-removing. In terms of domain architecture, HD spans 436 to 558 (VDDHILTVVR…VQTHERLSAL (123 aa)). ACT domains lie at 673 to 757 (QVMV…SHSR) and 785 to 852 (SVEI…EQLS).

This sequence belongs to the GlnD family. Mg(2+) serves as cofactor.

The enzyme catalyses [protein-PII]-L-tyrosine + UTP = [protein-PII]-uridylyl-L-tyrosine + diphosphate. It carries out the reaction [protein-PII]-uridylyl-L-tyrosine + H2O = [protein-PII]-L-tyrosine + UMP + H(+). Its activity is regulated as follows. Uridylyltransferase (UTase) activity is inhibited by glutamine, while glutamine activates uridylyl-removing (UR) activity. Its function is as follows. Modifies, by uridylylation and deuridylylation, the PII regulatory proteins (GlnB and homologs), in response to the nitrogen status of the cell that GlnD senses through the glutamine level. Under low glutamine levels, catalyzes the conversion of the PII proteins and UTP to PII-UMP and PPi, while under higher glutamine levels, GlnD hydrolyzes PII-UMP to PII and UMP (deuridylylation). Thus, controls uridylylation state and activity of the PII proteins, and plays an important role in the regulation of nitrogen assimilation and metabolism. This Neisseria meningitidis serogroup A / serotype 4A (strain DSM 15465 / Z2491) protein is Bifunctional uridylyltransferase/uridylyl-removing enzyme.